Reading from the N-terminus, the 1287-residue chain is Pullulanase A (1287 aa).

The N-terminal stretch at 1–44 (MRKTPSHTEKKMVYSIRSLKNGTGSVLIGASLVLLAMATPTISS) is a signal peptide. The tract at residues 42 to 139 (ISSDESTPTT…VTTETKAEEP (98 aa)) is disordered. The span at 48 to 61 (TPTTNEPNNRNTTT) shows a compositional bias: low complexity. A compositionally biased stretch (polar residues) spans 79 to 90 (DISSPGNANASL). 2 stretches are compositionally biased toward low complexity: residues 99 to 113 (TEPT…DPAP) and 122 to 133 (EPTTSTSPVTTE). Residues 163 to 165 (WTW), tryptophan 175, aspartate 221, 270 to 272 (WYW), tryptophan 283, lysine 325, and asparagine 330 contribute to the substrate site. Positions 668 and 670 each coordinate Ca(2+). Substrate is bound by residues 674 to 675 (YD) and phenylalanine 750. The Nucleophile role is filled by aspartate 785. The active-site Proton donor is glutamate 814. Tryptophan 816 is a binding site for substrate. Methionine 835, threonine 838, and aspartate 839 together coordinate Ca(2+). Substrate-binding residues include aspartate 846, arginine 849, and tyrosine 856. Aspartate 889 and aspartate 893 together coordinate Ca(2+). Residues asparagine 903, lysine 976, and 996-998 (DSY) contribute to the substrate site. Aspartate 999 is a binding site for Ca(2+). The interval 1147–1255 (VSQNGTSHES…TPDRQAELPN (109 aa)) is disordered. Over residues 1156–1203 (STAEEKPDSTPSKPEHQNEASHPAHQDPAPEARPDSTKPDAKVADAEN) the composition is skewed to basic and acidic residues. The segment covering 1212–1225 (SQAEQPAQEAQASS) has biased composition (low complexity). A compositionally biased stretch (basic and acidic residues) spans 1228 to 1239 (EAVRKESVENSS). The LPXTG sorting signal motif lies at 1253–1257 (LPNTG). Threonine 1256 carries the pentaglycyl murein peptidoglycan amidated threonine modification. Residues 1257 to 1287 (GIKNENKLLFAGISLLALLGLGFLLKNKKEN) constitute a propeptide, removed by sortase.

It belongs to the glycosyl hydrolase 13 family.

It localises to the secreted. The protein localises to the cell wall. It is found in the cell surface. It catalyses the reaction Hydrolysis of (1-&gt;6)-alpha-D-glucosidic linkages in pullulan, amylopectin and glycogen, and in the alpha- and beta-limit dextrins of amylopectin and glycogen.. With respect to regulation, inhibited by 4-O-alpha-D-glucopyranosylmoranoline (G1M). Its function is as follows. Virulence factor. Involved in the degradation of glycogen of the mammalian host cells. Hydrolyzes the alpha-1,6-branchpoints of glycogen. Hydrolyzes pullulan. Does not hydrolyze dextran. Binds to mouse lung alveolar type II cells that are rich in glycogen stores. Is an alpha-glucan-specific carbohydrate-binding protein, which binds to amylose (pure alpha-(1,4)-linked glucose), amylopectin (alpha-(1,4)-linked glucose with alpha-(1,6) branch points), pullulan (linear polymer of mixed alpha-(1,4)- and alpha-(1,6)-linked glucose) and glycogen (similar to amylopectin with more frequent alpha-(1,6) branch points) in vitro. Does not bind to dextran (a linear polymer of alpha-(1,6)-linked glucose). In Streptococcus pneumoniae, this protein is Pullulanase A.